We begin with the raw amino-acid sequence, 743 residues long: Dynein regulatory complex protein 1 homolog (743 aa).

Acidic residues-rich tracts occupy residues 1-10 and 19-28; these read MDDNEDELEE and SVEEEEEVEP. The segment at 1 to 34 is disordered; it reads MDDNEDELEEHQELVSDGSVEEEEEVEPDLGPVD. Coiled-coil stretches lie at residues 175-332 and 395-416; these read DQIE…VLMN and KLHSNINDMESKAHQARLNNRE. The interval 599–620 is disordered; it reads NRLQGAAGGQPDEKEHRSTGDT. Positions 715-742 form a coiled coil; it reads KMRVQYDAEVVFLRRQNEELRHLLQKFT.

Belongs to the DRC1 family.

This Drosophila melanogaster (Fruit fly) protein is Dynein regulatory complex protein 1 homolog.